The chain runs to 439 residues: Transcriptional enhancer factor TEF-5 (439 aa).

Residues 1–12 are compositionally biased toward polar residues; it reads MASNSWTANSSP. Positions 1-34 are disordered; it reads MASNSWTANSSPGEAREDGSEGLDKGLDNDAEGV. N-acetylalanine is present on Ala-2. Positions 14–28 are enriched in basic and acidic residues; it reads EAREDGSEGLDKGLD. The TEA DNA-binding region spans 28-104; that stretch reads DNDAEGVWSP…QVLARKKVRE (77 aa). Ser-148 carries the phosphoserine modification. Residues 173–439 form a transcriptional activation region; that stretch reads GPSQDIKPFA…QHHVYKLVKD (267 aa).

Interacts with YAP1 and WWTR1/TAZ. In terms of tissue distribution, expressed in embryos as well as in many adult tissues.

Its subcellular location is the nucleus. Functionally, transcription factor which plays a key role in the Hippo signaling pathway, a pathway involved in organ size control and tumor suppression by restricting proliferation and promoting apoptosis. The core of this pathway is composed of a kinase cascade wherein MST1/MST2, in complex with its regulatory protein SAV1, phosphorylates and activates LATS1/2 in complex with its regulatory protein MOB1, which in turn phosphorylates and inactivates YAP1 oncoprotein and WWTR1/TAZ. Acts by mediating gene expression of YAP1 and WWTR1/TAZ, thereby regulating cell proliferation, migration and epithelial mesenchymal transition (EMT) induction. This Mus musculus (Mouse) protein is Transcriptional enhancer factor TEF-5 (Tead3).